Reading from the N-terminus, the 769-residue chain is Protein lethal(2)denticleless (769 aa).

6 WD repeats span residues 99–129 (CHFNAVFDLEWAPGQMRFVSASGDHTARLWE), 143–174 (GHTRSVKSAAFKRTDPAVFATGGRDGAILIWD), 194–249 (GHTG…KVWD), 264–303 (RHKLPYAGSSTFRGFTNLIVDASGTRLYANCMDNTIYCYN), 320–349 (NSTFYIKSCLSPDGKYLLSGSSDERAYIWN), and 362–393 (GHTVEVTCVAWGSSHDCPIVTCSDDARHKIWR). A disordered region spans residues 196–221 (TGGPGTPVSQRKQRTRTPKMAGGTTS). A Phosphothreonine modification is found at Thr-201. Ser-204 is modified (phosphoserine). 3 disordered regions span residues 448 to 467 (RLMDQNERTPGSVEKTTTKR), 476 to 562 (AGQE…HVYT), and 655 to 769 (SPRL…VGSD). Thr-456 carries the post-translational modification Phosphothreonine. At Ser-459 the chain carries Phosphoserine. Over residues 503–518 (PSSQETACRHIQLQSI) the composition is skewed to polar residues. The residue at position 524 (Ser-524) is a Phosphoserine. The segment covering 524–533 (SPSKRQKENS) has biased composition (basic and acidic residues). The segment covering 546–562 (STPSHSPLSENVNHVYT) has biased composition (polar residues). Ser-655 is modified (phosphoserine). The span at 657 to 666 (RLQSLRQSEC) shows a compositional bias: polar residues. A phosphoserine mark is found at Ser-679, Ser-691, and Ser-711. Over residues 689–704 (AGSSSHSHSQSQPKTP) the composition is skewed to low complexity. Over residues 705-714 (TSSRRNSETT) the composition is skewed to polar residues. The span at 728–743 (PAEETTTTNAAPSSSD) shows a compositional bias: low complexity. The segment covering 758 to 769 (SMRTPTTAVGSD) has biased composition (polar residues).

The protein belongs to the WD repeat cdt2 family. In terms of assembly, component of the DCX(DTL) E3 ubiquitin ligase complex, at least composed of Cul-4, pic/DDB1, l(2)dtl/CDT2 and Roc1a. Ubiquitously expressed during embryogenesis with no sign of tissue specificity in expression up to stage 17.

The protein localises to the cytoplasm. It functions in the pathway protein modification; protein ubiquitination. Substrate-specific adapter of a DCX (DDB1-CUL4-X-box) E3 ubiquitin-protein ligase complex required for cell cycle control. The DCX(DTL) complex, also named CRL4(CDT2) complex, mediates the polyubiquitination and subsequent degradation of E2f during S phase. E2f degradation is necessary to ensure proper development. Substrates require their interaction with PCNA for their polyubiquitination: substrates interact with PCNA via their PIP-box, leading to recruit the DCX(DTL) complex. In Drosophila melanogaster (Fruit fly), this protein is Protein lethal(2)denticleless (l(2)dtl).